Consider the following 258-residue polypeptide: Pro-thyrotropin-releasing hormone-A (258 aa).

Residues 1–22 form the signal peptide; it reads MKSACLIILASLVVCNLTLARG. Q78 carries the pyrrolidone carboxylic acid modification. P80 is subject to Proline amide. Basic and acidic residues-rich tracts occupy residues 84–98 and 107–119; these read YQEE…GKRE and EVQK…KRED. Residues 84-124 are disordered; the sequence is YQEELEKRQHPGKREEDEDEDYDEVQKRQHPGKREDEFDSF. Q92 carries the post-translational modification Pyrrolidone carboxylic acid. P94 is modified (proline amide). Q112 carries the post-translational modification Pyrrolidone carboxylic acid. At P114 the chain carries Proline amide. Q131 carries the post-translational modification Pyrrolidone carboxylic acid. The residue at position 133 (P133) is a Proline amide. Q156 is modified (pyrrolidone carboxylic acid). P158 carries the proline amide modification. 2 disordered regions span residues 166–215 and 236–258; these read YSKR…PCDV and SRAE…TEQE. The residue at position 170 (Q170) is a Pyrrolidone carboxylic acid. The residue at position 172 (P172) is a Proline amide. Residues 184-193 are compositionally biased toward basic and acidic residues; sequence GDLRELEKRQ. At Q193 the chain carries Pyrrolidone carboxylic acid. P195 is modified (proline amide). Position 242 is a pyrrolidone carboxylic acid (Q242). P244 carries the proline amide modification.

It belongs to the TRH family.

It localises to the secreted. Functionally, functions as a regulator of the biosynthesis of TSH in the anterior pituitary gland and as a neurotransmitter/ neuromodulator in the central and peripheral nervous systems. The chain is Pro-thyrotropin-releasing hormone-A (trha) from Oncorhynchus nerka (Sockeye salmon).